Reading from the N-terminus, the 141-residue chain is Hemoglobin subunit alpha (141 aa).

One can recognise a Globin domain in the interval 1 to 141 (VLSSADKNNV…VSTVLTSKYR (141 aa)). Phosphoserine is present on serine 3. Lysine 7 and lysine 11 each carry N6-succinyllysine. Lysine 16 bears the N6-acetyllysine; alternate mark. An N6-succinyllysine; alternate modification is found at lysine 16. Tyrosine 24 carries the post-translational modification Phosphotyrosine. Position 35 is a phosphoserine (serine 35). Lysine 40 carries the post-translational modification N6-succinyllysine. Serine 49 is modified (phosphoserine). Position 58 (histidine 58) interacts with O2. Histidine 87 provides a ligand contact to heme b. A Phosphoserine modification is found at serine 102. The residue at position 108 (threonine 108) is a Phosphothreonine. Serine 124 is modified (phosphoserine). A phosphothreonine mark is found at threonine 134 and threonine 137. Serine 138 bears the Phosphoserine mark.

Belongs to the globin family. In terms of assembly, heterotetramer of two alpha chains and two beta chains. Red blood cells.

In terms of biological role, involved in oxygen transport from the lung to the various peripheral tissues. Hemopressin acts as an antagonist peptide of the cannabinoid receptor CNR1. Hemopressin-binding efficiently blocks cannabinoid receptor CNR1 and subsequent signaling. The polypeptide is Hemoglobin subunit alpha (HBA) (Panthera tigris sumatrae (Sumatran tiger)).